The following is a 459-amino-acid chain: Bifunctional protein GlmU (459 aa).

The interval 1 to 229 is pyrophosphorylase; the sequence is MSNFAIILAA…FDESLGVNDR (229 aa). UDP-N-acetyl-alpha-D-glucosamine-binding positions include 8 to 11, Lys22, Gln72, 77 to 78, 101 to 102, Gly139, Glu154, Asn169, and Asn227; these read LAAG, GT, and GD. Asp102 lines the Ca(2+) pocket. Residue Asp102 participates in Mg(2+) binding. A Ca(2+)-binding site is contributed by Asn227. Asn227 provides a ligand contact to Mg(2+). The tract at residues 230-250 is linker; sequence VALATAESVMRRRINHKHMVN. An N-acetyltransferase region spans residues 251–459; that stretch reads GVSFVNPEAT…TRLPHHPKNQ (209 aa). The UDP-N-acetyl-alpha-D-glucosamine site is built by Arg332 and Lys350. The active-site Proton acceptor is the His362. Tyr365 and Asn376 together coordinate UDP-N-acetyl-alpha-D-glucosamine. Residues Ala379, 385 to 386, Ser404, Ala422, and Arg439 contribute to the acetyl-CoA site; that span reads NY.

The protein in the N-terminal section; belongs to the N-acetylglucosamine-1-phosphate uridyltransferase family. In the C-terminal section; belongs to the transferase hexapeptide repeat family. As to quaternary structure, homotrimer. Mg(2+) serves as cofactor. Ca(2+) is required as a cofactor.

The protein localises to the cytoplasm. The catalysed reaction is alpha-D-glucosamine 1-phosphate + acetyl-CoA = N-acetyl-alpha-D-glucosamine 1-phosphate + CoA + H(+). It catalyses the reaction N-acetyl-alpha-D-glucosamine 1-phosphate + UTP + H(+) = UDP-N-acetyl-alpha-D-glucosamine + diphosphate. It functions in the pathway nucleotide-sugar biosynthesis; UDP-N-acetyl-alpha-D-glucosamine biosynthesis; N-acetyl-alpha-D-glucosamine 1-phosphate from alpha-D-glucosamine 6-phosphate (route II): step 2/2. Its pathway is nucleotide-sugar biosynthesis; UDP-N-acetyl-alpha-D-glucosamine biosynthesis; UDP-N-acetyl-alpha-D-glucosamine from N-acetyl-alpha-D-glucosamine 1-phosphate: step 1/1. The protein operates within bacterial outer membrane biogenesis; LPS lipid A biosynthesis. In terms of biological role, catalyzes the last two sequential reactions in the de novo biosynthetic pathway for UDP-N-acetylglucosamine (UDP-GlcNAc). The C-terminal domain catalyzes the transfer of acetyl group from acetyl coenzyme A to glucosamine-1-phosphate (GlcN-1-P) to produce N-acetylglucosamine-1-phosphate (GlcNAc-1-P), which is converted into UDP-GlcNAc by the transfer of uridine 5-monophosphate (from uridine 5-triphosphate), a reaction catalyzed by the N-terminal domain. In Streptococcus pneumoniae serotype 4 (strain ATCC BAA-334 / TIGR4), this protein is Bifunctional protein GlmU.